Reading from the N-terminus, the 574-residue chain is 2-succinyl-5-enolpyruvyl-6-hydroxy-3-cyclohexene-1-carboxylate synthase (574 aa).

The protein belongs to the TPP enzyme family. MenD subfamily. Homodimer. The cofactor is Mg(2+). Mn(2+) is required as a cofactor. Requires thiamine diphosphate as cofactor.

It catalyses the reaction isochorismate + 2-oxoglutarate + H(+) = 5-enolpyruvoyl-6-hydroxy-2-succinyl-cyclohex-3-ene-1-carboxylate + CO2. The protein operates within quinol/quinone metabolism; 1,4-dihydroxy-2-naphthoate biosynthesis; 1,4-dihydroxy-2-naphthoate from chorismate: step 2/7. It participates in cofactor biosynthesis; phylloquinone biosynthesis. Catalyzes the thiamine diphosphate-dependent decarboxylation of 2-oxoglutarate and the subsequent addition of the resulting succinic semialdehyde-thiamine pyrophosphate anion to isochorismate to yield 2-succinyl-5-enolpyruvyl-6-hydroxy-3-cyclohexene-1-carboxylate (SEPHCHC). The protein is 2-succinyl-5-enolpyruvyl-6-hydroxy-3-cyclohexene-1-carboxylate synthase of Prochlorococcus marinus (strain SARG / CCMP1375 / SS120).